The chain runs to 77 residues: U8-lycotoxin-Ls1r (77 aa).

Positions Met-1–Ala-20 are cleaved as a signal peptide. Residues Gln-21–Lys-26 constitute a propeptide that is removed on maturation.

The protein belongs to the neurotoxin 19 (CSTX) family. 08 (U8-Lctx) subfamily. Post-translationally, contains 4 disulfide bonds. Expressed by the venom gland.

The protein localises to the secreted. The polypeptide is U8-lycotoxin-Ls1r (Lycosa singoriensis (Wolf spider)).